We begin with the raw amino-acid sequence, 513 residues long: GMP synthase [glutamine-hydrolyzing] (513 aa).

A Glutamine amidotransferase type-1 domain is found at 3-192 (TVVVLDYGSQ…VSKIAKMEKN (190 aa)). Cysteine 80 acts as the Nucleophile in catalysis. Residues histidine 166 and glutamate 168 contribute to the active site. Residues 193–388 (WEMKDFVSEK…LELPQSMINR (196 aa)) enclose the GMPS ATP-PPase domain. ATP is bound at residue 220–226 (SGGVDSS).

As to quaternary structure, homodimer.

The catalysed reaction is XMP + L-glutamine + ATP + H2O = GMP + L-glutamate + AMP + diphosphate + 2 H(+). It participates in purine metabolism; GMP biosynthesis; GMP from XMP (L-Gln route): step 1/1. In terms of biological role, catalyzes the synthesis of GMP from XMP. This Thermosipho melanesiensis (strain DSM 12029 / CIP 104789 / BI429) protein is GMP synthase [glutamine-hydrolyzing].